Consider the following 480-residue polypeptide: Glutamate--tRNA ligase (480 aa).

Positions 21–31 (PSPTGYLHVGG) match the 'HIGH' region motif. Cys-110, Cys-112, Cys-137, and His-139 together coordinate Zn(2+). Residues 248 to 252 (KLSKR) carry the 'KMSKS' region motif. Residue Lys-251 coordinates ATP.

Belongs to the class-I aminoacyl-tRNA synthetase family. Glutamate--tRNA ligase type 1 subfamily. Monomer. It depends on Zn(2+) as a cofactor.

The protein resides in the cytoplasm. It carries out the reaction tRNA(Glu) + L-glutamate + ATP = L-glutamyl-tRNA(Glu) + AMP + diphosphate. Functionally, catalyzes the attachment of glutamate to tRNA(Glu) in a two-step reaction: glutamate is first activated by ATP to form Glu-AMP and then transferred to the acceptor end of tRNA(Glu). The protein is Glutamate--tRNA ligase of Haemophilus influenzae (strain ATCC 51907 / DSM 11121 / KW20 / Rd).